The chain runs to 299 residues: Very long chain fatty acid elongase 5 (299 aa).

At M1 the chain carries N-acetylmethionine. 7 helical membrane passes run 26–46 (WFLLDNYIPTFVCSAIYLLIV), 64–84 (ILVVYNLGLTLLSLYMFYELV), 112–132 (VLWWYYFSKLIEFMDTFFFIL), 139–158 (ITVLHVYHHATMLNIWWFVM), 168–187 (FGATLNSFIHVLMYSYYGLS), 205–225 (GQLVQFVLTIIQTSCGVIWPC), and 227–247 (FPLGWLYFQIGYMISLIALFT).

It belongs to the ELO family. ELOVL5 subfamily. As to quaternary structure, interacts with TECR. As to expression, highly expressed in lung and brain.

The protein resides in the endoplasmic reticulum membrane. The protein localises to the cell projection. Its subcellular location is the dendrite. It catalyses the reaction a very-long-chain acyl-CoA + malonyl-CoA + H(+) = a very-long-chain 3-oxoacyl-CoA + CO2 + CoA. It carries out the reaction (6Z,9Z,12Z,15Z)-octadecatetraenoyl-CoA + malonyl-CoA + H(+) = (8Z,11Z,14Z,17Z)-3-oxoicosatetraenoyl-CoA + CO2 + CoA. The enzyme catalyses (6Z,9Z,12Z)-octadecatrienoyl-CoA + malonyl-CoA + H(+) = (8Z,11Z,14Z)-3-oxoeicosatrienoyl-CoA + CO2 + CoA. The catalysed reaction is (5Z,8Z,11Z,14Z,17Z)-eicosapentaenoyl-CoA + malonyl-CoA + H(+) = 3-oxo-(7Z,10Z,13Z,16Z,19Z)-docosapentaenoyl-CoA + CO2 + CoA. It catalyses the reaction (5Z,8Z,11Z,14Z)-eicosatetraenoyl-CoA + malonyl-CoA + H(+) = (7Z,10Z,13Z,16Z)-3-oxodocosatetraenoyl-CoA + CO2 + CoA. It carries out the reaction (9Z,12Z,15Z)-octadecatrienoyl-CoA + malonyl-CoA + H(+) = (11Z,14Z,17Z)-3-oxoeicosatrienoyl-CoA + CO2 + CoA. The enzyme catalyses (9Z)-hexadecenoyl-CoA + malonyl-CoA + H(+) = 3-oxo-(11Z)-octadecenoyl-CoA + CO2 + CoA. The catalysed reaction is (9Z)-octadecenoyl-CoA + malonyl-CoA + H(+) = 3-oxo-(11Z)-eicosenoyl-CoA + CO2 + CoA. It catalyses the reaction (11Z)-octadecenoyl-CoA + malonyl-CoA + H(+) = 3-oxo-(13Z)-eicosenoyl-CoA + CO2 + CoA. It carries out the reaction (9Z,12Z)-octadecadienoyl-CoA + malonyl-CoA + H(+) = (11Z,14Z)-3-oxoicosa-11,14-dienoyl-CoA + CO2 + CoA. It functions in the pathway lipid metabolism; polyunsaturated fatty acid biosynthesis. Catalyzes the first and rate-limiting reaction of the four reactions that constitute the long-chain fatty acids elongation cycle. This endoplasmic reticulum-bound enzymatic process allows the addition of 2 carbons to the chain of long- and very long-chain fatty acids (VLCFAs) per cycle. Condensing enzyme that acts specifically toward polyunsaturated acyl-CoA with the higher activity toward C18:3(n-6) acyl-CoA. May participate in the production of monounsaturated and of polyunsaturated VLCFAs of different chain lengths that are involved in multiple biological processes as precursors of membrane lipids and lipid mediators. In conditions where the essential linoleic and alpha linoleic fatty acids are lacking it is also involved in the synthesis of Mead acid from oleic acid. This chain is Very long chain fatty acid elongase 5, found in Rattus norvegicus (Rat).